A 524-amino-acid polypeptide reads, in one-letter code: Thermosome subunit 3 (524 aa).

Belongs to the TCP-1 chaperonin family. As to quaternary structure, the thermosome or CCT complex is a oligomeric complex of two octameric double-ring structures; the complex is probably a heterooligomer of CCT1, CCT2 and CCT3 with yet unknown stoichiometry.

Functionally, molecular chaperone that assists in the folding or refolding of nascent or denatured proteins along with ATP hydrolysis. ATPase activity is highest in thermosome assemblies containing CCT1:CCT2, followed by assemblies containing CCT1:CCT2:CCT3. Not required for thermosome ATPase activity. Not required for growth. This is Thermosome subunit 3 (cct3) from Haloferax volcanii (strain ATCC 29605 / DSM 3757 / JCM 8879 / NBRC 14742 / NCIMB 2012 / VKM B-1768 / DS2) (Halobacterium volcanii).